An 82-amino-acid polypeptide reads, in one-letter code: RNA-binding protein Hfq (82 aa).

A Sm domain is found at 10-70; sequence DTFLNHVRKN…ISTIMPAQPV (61 aa).

The protein belongs to the Hfq family. As to quaternary structure, homohexamer.

In terms of biological role, RNA chaperone that binds small regulatory RNA (sRNAs) and mRNAs to facilitate mRNA translational regulation in response to envelope stress, environmental stress and changes in metabolite concentrations. Also binds with high specificity to tRNAs. The sequence is that of RNA-binding protein Hfq from Parvibaculum lavamentivorans (strain DS-1 / DSM 13023 / NCIMB 13966).